The following is a 230-amino-acid chain: Large ribosomal subunit protein uL1c (230 aa).

The protein belongs to the universal ribosomal protein uL1 family. As to quaternary structure, part of the 50S ribosomal subunit.

It localises to the plastid. Its subcellular location is the chloroplast. Functionally, binds directly to 23S rRNA. Might be involved in E site tRNA release (Potential). This Trieres chinensis (Marine centric diatom) protein is Large ribosomal subunit protein uL1c (rpl1).